The chain runs to 186 residues: ATP synthase subunit delta (186 aa).

It belongs to the ATPase delta chain family. In terms of assembly, F-type ATPases have 2 components, F(1) - the catalytic core - and F(0) - the membrane proton channel. F(1) has five subunits: alpha(3), beta(3), gamma(1), delta(1), epsilon(1). F(0) has three main subunits: a(1), b(2) and c(10-14). The alpha and beta chains form an alternating ring which encloses part of the gamma chain. F(1) is attached to F(0) by a central stalk formed by the gamma and epsilon chains, while a peripheral stalk is formed by the delta and b chains.

It localises to the cell inner membrane. Functionally, f(1)F(0) ATP synthase produces ATP from ADP in the presence of a proton or sodium gradient. F-type ATPases consist of two structural domains, F(1) containing the extramembraneous catalytic core and F(0) containing the membrane proton channel, linked together by a central stalk and a peripheral stalk. During catalysis, ATP synthesis in the catalytic domain of F(1) is coupled via a rotary mechanism of the central stalk subunits to proton translocation. This protein is part of the stalk that links CF(0) to CF(1). It either transmits conformational changes from CF(0) to CF(1) or is implicated in proton conduction. This Leptospira interrogans serogroup Icterohaemorrhagiae serovar copenhageni (strain Fiocruz L1-130) protein is ATP synthase subunit delta.